We begin with the raw amino-acid sequence, 710 residues long: Integrator complex subunit 10 (710 aa).

Ser231, Ser381, and Ser382 each carry phosphoserine. Residue Lys464 forms a Glycyl lysine isopeptide (Lys-Gly) (interchain with G-Cter in SUMO2) linkage.

The protein belongs to the Integrator subunit 10 family. Component of the Integrator complex, composed of core subunits INTS1, INTS2, INTS3, INTS4, INTS5, INTS6, INTS7, INTS8, INTS9/RC74, INTS10, INTS11/CPSF3L, INTS12, INTS13, INTS14 and INTS15. The core complex associates with protein phosphatase 2A subunits PPP2CA and PPP2R1A, to form the Integrator-PP2A (INTAC) complex. INTS10 is part of the tail subcomplex, composed of INTS10, INTS13, INTS14 and INTS15.

The protein localises to the nucleus. In terms of biological role, component of the integrator complex, a multiprotein complex that terminates RNA polymerase II (Pol II) transcription in the promoter-proximal region of genes. The integrator complex provides a quality checkpoint during transcription elongation by driving premature transcription termination of transcripts that are unfavorably configured for transcriptional elongation: the complex terminates transcription by (1) catalyzing dephosphorylation of the C-terminal domain (CTD) of Pol II subunit POLR2A/RPB1 and SUPT5H/SPT5, (2) degrading the exiting nascent RNA transcript via endonuclease activity and (3) promoting the release of Pol II from bound DNA. The integrator complex is also involved in terminating the synthesis of non-coding Pol II transcripts, such as enhancer RNAs (eRNAs), small nuclear RNAs (snRNAs), telomerase RNAs and long non-coding RNAs (lncRNAs). Within the integrator complex, INTS10 is part of the integrator tail module that acts as a platform for the recruitment of transcription factors at promoters. May be not involved in the recruitment of cytoplasmic dynein to the nuclear envelope, probably as component of the integrator complex. This is Integrator complex subunit 10 (Ints10) from Mus musculus (Mouse).